The following is a 55-amino-acid chain: Large ribosomal subunit protein bL33 (55 aa).

This sequence belongs to the bacterial ribosomal protein bL33 family.

This chain is Large ribosomal subunit protein bL33, found in Methylobacterium nodulans (strain LMG 21967 / CNCM I-2342 / ORS 2060).